We begin with the raw amino-acid sequence, 86 residues long: Cytochrome c oxidase subunit 3 (86 aa).

At 1–15 (MAHQAHSYHMVDPSP) the chain is on the mitochondrial matrix side. A helical membrane pass occupies residues 16-34 (WPIFGAAAALLTTSGLVMW). Over 35 to 40 (FHYNSS) the chain is Mitochondrial intermembrane. The chain crosses the membrane as a helical span at residues 41–66 (ILLAAGLLSMLLVMLQWWREIVREST). The Mitochondrial matrix portion of the chain corresponds to 67–86 (FQGHHTPTVQKGLRYGMILF).

The protein belongs to the cytochrome c oxidase subunit 3 family. In terms of assembly, component of the cytochrome c oxidase (complex IV, CIV), a multisubunit enzyme composed of 14 subunits. The complex is composed of a catalytic core of 3 subunits MT-CO1, MT-CO2 and MT-CO3, encoded in the mitochondrial DNA, and 11 supernumerary subunits COX4I, COX5A, COX5B, COX6A, COX6B, COX6C, COX7A, COX7B, COX7C, COX8 and NDUFA4, which are encoded in the nuclear genome. The complex exists as a monomer or a dimer and forms supercomplexes (SCs) in the inner mitochondrial membrane with NADH-ubiquinone oxidoreductase (complex I, CI) and ubiquinol-cytochrome c oxidoreductase (cytochrome b-c1 complex, complex III, CIII), resulting in different assemblies (supercomplex SCI(1)III(2)IV(1) and megacomplex MCI(2)III(2)IV(2)).

Its subcellular location is the mitochondrion inner membrane. The catalysed reaction is 4 Fe(II)-[cytochrome c] + O2 + 8 H(+)(in) = 4 Fe(III)-[cytochrome c] + 2 H2O + 4 H(+)(out). In terms of biological role, component of the cytochrome c oxidase, the last enzyme in the mitochondrial electron transport chain which drives oxidative phosphorylation. The respiratory chain contains 3 multisubunit complexes succinate dehydrogenase (complex II, CII), ubiquinol-cytochrome c oxidoreductase (cytochrome b-c1 complex, complex III, CIII) and cytochrome c oxidase (complex IV, CIV), that cooperate to transfer electrons derived from NADH and succinate to molecular oxygen, creating an electrochemical gradient over the inner membrane that drives transmembrane transport and the ATP synthase. Cytochrome c oxidase is the component of the respiratory chain that catalyzes the reduction of oxygen to water. Electrons originating from reduced cytochrome c in the intermembrane space (IMS) are transferred via the dinuclear copper A center (CU(A)) of subunit 2 and heme A of subunit 1 to the active site in subunit 1, a binuclear center (BNC) formed by heme A3 and copper B (CU(B)). The BNC reduces molecular oxygen to 2 water molecules using 4 electrons from cytochrome c in the IMS and 4 protons from the mitochondrial matrix. This chain is Cytochrome c oxidase subunit 3 (MT-CO3), found in Anas platyrhynchos (Mallard).